The following is a 236-amino-acid chain: LexA repressor (236 aa).

The segment at residues 26–46 is a DNA-binding region (H-T-H motif); the sequence is FDEMKDALDLRSKSGIHRLII. Active-site for autocatalytic cleavage activity residues include Ser157 and Lys195.

Belongs to the peptidase S24 family. In terms of assembly, homodimer.

It carries out the reaction Hydrolysis of Ala-|-Gly bond in repressor LexA.. Functionally, represses a number of genes involved in the response to DNA damage (SOS response), including recA and lexA. In the presence of single-stranded DNA, RecA interacts with LexA causing an autocatalytic cleavage which disrupts the DNA-binding part of LexA, leading to derepression of the SOS regulon and eventually DNA repair. The polypeptide is LexA repressor (Methylocella silvestris (strain DSM 15510 / CIP 108128 / LMG 27833 / NCIMB 13906 / BL2)).